Reading from the N-terminus, the 237-residue chain is Class B acid phosphatase (237 aa).

A signal peptide spans 1–23 (MRKVTLVFSAIAFAFSLNGVVQA). The Nucleophile role is filled by D69. Mg(2+) is bound by residues D69 and D71. The Proton donor role is filled by D71. Substrate contacts are provided by residues 137-138 (TG) and K177. D192 is a Mg(2+) binding site.

This sequence belongs to the class B bacterial acid phosphatase family. In terms of assembly, homotetramer. Mg(2+) is required as a cofactor.

The protein localises to the periplasm. The enzyme catalyses a phosphate monoester + H2O = an alcohol + phosphate. Its function is as follows. Dephosphorylates several organic phosphate monoesters. Also has a phosphotransferase activity catalyzing the transfer of low-energy phosphate groups from organic phosphate monoesters to free hydroxyl groups of various organic compounds. This is Class B acid phosphatase from Xenorhabdus bovienii (strain SS-2004) (Xenorhabdus nematophila subsp. bovienii).